Reading from the N-terminus, the 81-residue chain is Ferredoxin (81 aa).

The 4Fe-4S ferredoxin-type domain maps to 2–30; sequence KYTIVDKETCIACGACGAAAPDIYDYDED. Residues C11, C14, C17, and C61 each coordinate [4Fe-4S] cluster.

The cofactor is [4Fe-4S] cluster.

Ferredoxins are iron-sulfur proteins that transfer electrons in a wide variety of metabolic reactions. The sequence is that of Ferredoxin (fer) from Geobacillus stearothermophilus (Bacillus stearothermophilus).